We begin with the raw amino-acid sequence, 407 residues long: MVRKCLLAVLMLLSVIVLPGCWDKRELTDLAIISAIGIDRTNDSNYVLHLQIINPGNVAGGLQGGGAGDRPPVSVYSIEGNNITEALRKASMKVSRRLYFAHTNLVVINEKLAKEEGLDFVLDNLDRDTEFRTTATFVVAHKTKAENIVKILTPIDKIPSNKVNKTLDFTEAQYGRVVKINIQDVLKTLAANTMAPVIPGYMMIGDDKKGVSMENTQATDPKAILQADGLAVFDKAGYLKYWLEDDESVGAVWLMNKIQHTFINADWGKTKDAVSLQVTHQDTKLVPKMRNGRPYIHVKVSVEGIIDAVKYPFQLSDPKVLAAIEKALNKELEKEISHTVKKIKKNKIDFIGFGDTIYRKYPEQWEKMKDTWDKEYLPELPIDVKAETYIRRTGLRNNPIKHQFKDD.

The first 20 residues, 1–20 (MVRKCLLAVLMLLSVIVLPG), serve as a signal peptide directing secretion. Cys-21 is lipidated: N-palmitoyl cysteine. Cys-21 carries S-diacylglycerol cysteine lipidation.

This sequence belongs to the GerABKC lipoprotein family.

The protein resides in the cell membrane. Involved in the germination response to the combination of glucose, fructose, L-asparagine, and KCl. The protein is Spore germination protein KC (gerKC) of Bacillus subtilis (strain 168).